The chain runs to 126 residues: Large ribosomal subunit protein bL12 (126 aa).

This sequence belongs to the bacterial ribosomal protein bL12 family. As to quaternary structure, homodimer. Part of the ribosomal stalk of the 50S ribosomal subunit. Forms a multimeric L10(L12)X complex, where L10 forms an elongated spine to which 2 to 4 L12 dimers bind in a sequential fashion. Binds GTP-bound translation factors.

In terms of biological role, forms part of the ribosomal stalk which helps the ribosome interact with GTP-bound translation factors. Is thus essential for accurate translation. This is Large ribosomal subunit protein bL12 from Elusimicrobium minutum (strain Pei191).